A 495-amino-acid polypeptide reads, in one-letter code: MKYKDLRDFLALLEAKGELKRIHQTIDPFLEMTEISDRTLQAQGPALLFEKPKGHAMPVLCNLFGTTQRVAMGMGQKDISTLRELGQLLAFLKEPEPPKGFRDLLSKLPKFKQILNMPNKILTSAPCQEEIWKDNLDLGCLPAMHCWPGDVAPLITWGLTITRGPHKERQNLGIYRQQVLSKNKIIMRWLPHRGGALDYREWCKTNPGQPFPVAVALGADPATILGAVTPVPDTLSEYAFSGLLRGYRTEVVKCLSSDLQVPANAEIVLEGYIQPGETAEEGPYGDHTGYYNETEHFPVFTVSHITKRQDAIYHSTYTGRPPDEPSILGAALNEVFIPILQKQFPEIVDFYLPPEGCSYRLAVVTIKKQYAGHAKRVMMGVWSFLRQFMYTKFVIVCDDDINARNWNDVIWAITTRMDPARDTLLIENTPIDYLDFASPVAGLGSKMGLDATNKWSAETQRVWGRTIKMDKSVCDRIDAIWDELNIFNQQSVKKK.

N171 contacts Mn(2+). Prenylated FMN is bound by residues I174–R176, R188–L190, and R193–G194. Residue E237 participates in Mn(2+) binding. D286 (proton donor) is an active-site residue.

This sequence belongs to the UbiD family. In terms of assembly, homohexamer. Requires prenylated FMN as cofactor. It depends on Mn(2+) as a cofactor.

It is found in the cell membrane. It catalyses the reaction a 4-hydroxy-3-(all-trans-polyprenyl)benzoate + H(+) = a 2-(all-trans-polyprenyl)phenol + CO2. The protein operates within cofactor biosynthesis; ubiquinone biosynthesis. Its function is as follows. Catalyzes the decarboxylation of 3-octaprenyl-4-hydroxy benzoate to 2-octaprenylphenol, an intermediate step in ubiquinone biosynthesis. The chain is 3-octaprenyl-4-hydroxybenzoate carboxy-lyase from Hamiltonella defensa subsp. Acyrthosiphon pisum (strain 5AT).